The sequence spans 592 residues: Glutathione-regulated potassium-efflux system protein KefB (592 aa).

13 helical membrane-spanning segments follow: residues serine 4–alanine 24, isoleucine 29–phenylalanine 49, glutamate 55–leucine 75, isoleucine 87–methionine 107, alanine 115–methionine 135, valine 152–glycine 172, histidine 177–glycine 197, phenylalanine 207–glycine 227, leucine 230–leucine 250, glycine 268–tyrosine 288, leucine 291–leucine 311, methionine 324–alanine 344, and alanine 356–valine 376. One can recognise an RCK N-terminal domain in the interval lysine 400–threonine 519.

This sequence belongs to the monovalent cation:proton antiporter 2 (CPA2) transporter (TC 2.A.37) family. KefB subfamily. Interacts with the regulatory subunit KefG.

It localises to the cell inner membrane. Functionally, pore-forming subunit of a potassium efflux system that confers protection against electrophiles. Catalyzes K(+)/H(+) antiport. In Escherichia coli O157:H7, this protein is Glutathione-regulated potassium-efflux system protein KefB.